The following is a 114-amino-acid chain: Large ribosomal subunit protein uL22 (114 aa).

Belongs to the universal ribosomal protein uL22 family. Part of the 50S ribosomal subunit.

This protein binds specifically to 23S rRNA; its binding is stimulated by other ribosomal proteins, e.g. L4, L17, and L20. It is important during the early stages of 50S assembly. It makes multiple contacts with different domains of the 23S rRNA in the assembled 50S subunit and ribosome. In terms of biological role, the globular domain of the protein is located near the polypeptide exit tunnel on the outside of the subunit, while an extended beta-hairpin is found that lines the wall of the exit tunnel in the center of the 70S ribosome. This is Large ribosomal subunit protein uL22 from Aeromonas hydrophila subsp. hydrophila (strain ATCC 7966 / DSM 30187 / BCRC 13018 / CCUG 14551 / JCM 1027 / KCTC 2358 / NCIMB 9240 / NCTC 8049).